Here is a 397-residue protein sequence, read N- to C-terminus: 1-deoxy-D-xylulose 5-phosphate reductoisomerase (397 aa).

NADPH-binding residues include T12, G13, S14, I15, G38, K39, N40, and N126. K127 contributes to the 1-deoxy-D-xylulose 5-phosphate binding site. E128 serves as a coordination point for NADPH. A Mn(2+)-binding site is contributed by D152. Residues S153, E154, S188, and H211 each contribute to the 1-deoxy-D-xylulose 5-phosphate site. E154 is a binding site for Mn(2+). G217 serves as a coordination point for NADPH. Residues S224, N229, K230, and E233 each coordinate 1-deoxy-D-xylulose 5-phosphate. Residue E233 coordinates Mn(2+).

It belongs to the DXR family. It depends on Mg(2+) as a cofactor. The cofactor is Mn(2+).

It catalyses the reaction 2-C-methyl-D-erythritol 4-phosphate + NADP(+) = 1-deoxy-D-xylulose 5-phosphate + NADPH + H(+). The protein operates within isoprenoid biosynthesis; isopentenyl diphosphate biosynthesis via DXP pathway; isopentenyl diphosphate from 1-deoxy-D-xylulose 5-phosphate: step 1/6. Functionally, catalyzes the NADPH-dependent rearrangement and reduction of 1-deoxy-D-xylulose-5-phosphate (DXP) to 2-C-methyl-D-erythritol 4-phosphate (MEP). The protein is 1-deoxy-D-xylulose 5-phosphate reductoisomerase of Haemophilus influenzae (strain ATCC 51907 / DSM 11121 / KW20 / Rd).